We begin with the raw amino-acid sequence, 159 residues long: 3-hydroxyacyl-[acyl-carrier-protein] dehydratase FabZ (159 aa).

His62 is a catalytic residue.

The protein belongs to the thioester dehydratase family. FabZ subfamily.

Its subcellular location is the cytoplasm. It carries out the reaction a (3R)-hydroxyacyl-[ACP] = a (2E)-enoyl-[ACP] + H2O. Functionally, involved in unsaturated fatty acids biosynthesis. Catalyzes the dehydration of short chain beta-hydroxyacyl-ACPs and long chain saturated and unsaturated beta-hydroxyacyl-ACPs. The protein is 3-hydroxyacyl-[acyl-carrier-protein] dehydratase FabZ of Methylobacterium nodulans (strain LMG 21967 / CNCM I-2342 / ORS 2060).